A 641-amino-acid polypeptide reads, in one-letter code: Leucine-rich repeat receptor-like serine/threonine/tyrosine-protein kinase SOBIR1 (641 aa).

Positions 1-31 (MAVPTGSANLFLRPLILAVLSFLLLSSFVSS) are cleaved as a signal peptide. The Extracellular segment spans residues 32–284 (VEWLDIDSSD…KKKKSKKKKV (253 aa)). 5 LRR repeats span residues 112–133 (ELKE…DILS), 136–159 (QLEV…SSLS), 160–182 (RLRI…KNLR), 183–205 (NLEN…IVSF), and 207–228 (NLRF…VMSS). The N-linked (GlcNAc...) asparagine glycan is linked to asparagine 154. The N-linked (GlcNAc...) asparagine glycan is linked to asparagine 186. The interval 243–278 (AETPTSSPTNKPNNSTTSKAPKGAPKPGKLKKKKKK) is disordered. Residues 245-259 (TPTSSPTNKPNNSTT) are compositionally biased toward polar residues. N-linked (GlcNAc...) asparagine glycosylation occurs at asparagine 256. Residues 260–269 (SKAPKGAPKP) show a composition bias toward low complexity. Residues 285–305 (AAWILGFVVGAIGGTISGFVF) traverse the membrane as a helical segment. Residues 306-641 (SVLFKLIIQA…VRTMLSQIKH (336 aa)) are Cytoplasmic-facing. Residues 347-641 (LASLEIIGRG…VRTMLSQIKH (295 aa)) form the Protein kinase domain. ATP contacts are provided by residues 353 to 361 (IGRGGCGEV) and lysine 377. The active-site Proton acceptor is the aspartate 489.

Belongs to the protein kinase superfamily. Ser/Thr protein kinase family. Interacts with CST. Interacts with RLP23. Component of a trimeric complex composed of RLP23, SOBIR1 and BAK1. BAK1 is recruited into a pre-formed RLP23-SOBIR1 complex in a ligand-dependent manner. In terms of processing, autophosphorylated on Ser, Thr and Tyr residues. Mostly present in leaves and flowers, with increasing expression in older flowers.

The protein resides in the cell membrane. It catalyses the reaction L-seryl-[protein] + ATP = O-phospho-L-seryl-[protein] + ADP + H(+). The enzyme catalyses L-threonyl-[protein] + ATP = O-phospho-L-threonyl-[protein] + ADP + H(+). It carries out the reaction L-tyrosyl-[protein] + ATP = O-phospho-L-tyrosyl-[protein] + ADP + H(+). Functionally, dual specificity kinase acting on both serine/threonine- and tyrosine-containing substrates. Acting as a counterplayer of BIR1, promotes the activation of plant defense and cell death. Component of the RLP23-SOBIR1-BAK1 complex that mediates NLP-triggered immunity. Functions as an inhibitor/regulator of abscission, probably by regulating membrane trafficking during abscission. The protein is Leucine-rich repeat receptor-like serine/threonine/tyrosine-protein kinase SOBIR1 (SOBIR1) of Arabidopsis thaliana (Mouse-ear cress).